Reading from the N-terminus, the 296-residue chain is Small ribosomal subunit protein uS2m (296 aa).

A disordered region spans residues 274 to 296; that stretch reads QGQKEPGDQGPAHPPGADMSHSL.

The protein belongs to the universal ribosomal protein uS2 family. Component of the mitochondrial small ribosomal subunit (mt-SSU). Mature mammalian 55S mitochondrial ribosomes consist of a small (28S) and a large (39S) subunit. The 28S small subunit contains a 12S ribosomal RNA (12S mt-rRNA) and 30 different proteins. The 39S large subunit contains a 16S rRNA (16S mt-rRNA), a copy of mitochondrial valine transfer RNA (mt-tRNA(Val)), which plays an integral structural role, and 52 different proteins.

It localises to the mitochondrion. In terms of biological role, required for mitoribosome formation and stability, and mitochondrial translation. In Homo sapiens (Human), this protein is Small ribosomal subunit protein uS2m (MRPS2).